A 669-amino-acid chain; its full sequence is DNA mismatch repair protein MutL (669 aa).

Residues 356-377 (FEQRQNTENNQEKTFSSEESNS) are disordered. Polar residues predominate over residues 361-377 (NTENNQEKTFSSEESNS).

Belongs to the DNA mismatch repair MutL/HexB family.

Functionally, this protein is involved in the repair of mismatches in DNA. It is required for dam-dependent methyl-directed DNA mismatch repair. May act as a 'molecular matchmaker', a protein that promotes the formation of a stable complex between two or more DNA-binding proteins in an ATP-dependent manner without itself being part of a final effector complex. This chain is DNA mismatch repair protein MutL, found in Staphylococcus aureus (strain MSSA476).